A 466-amino-acid polypeptide reads, in one-letter code: Ras-GEF domain-containing family member 1C (466 aa).

The disordered stretch occupies residues 1–37; it reads MPQTLSASDMVTPGSLSPPPTEPTDGEQAGQPLLDGA. The N-terminal Ras-GEF domain maps to 34–164; sequence LDGAPSSASL…LLQALHQKLA (131 aa). Residues 200 to 446 enclose the Ras-GEF domain; that stretch reads DPYTLAQQLT…YLASYESESP (247 aa).

Functionally, guanine nucleotide exchange factor (GEF). The protein is Ras-GEF domain-containing family member 1C (RASGEF1C) of Homo sapiens (Human).